A 112-amino-acid polypeptide reads, in one-letter code: Citrate synthase (112 aa).

Active-site residues include His-39 and Asp-97.

This sequence belongs to the citrate synthase family.

The catalysed reaction is oxaloacetate + acetyl-CoA + H2O = citrate + CoA + H(+). It functions in the pathway carbohydrate metabolism; tricarboxylic acid cycle; isocitrate from oxaloacetate: step 1/2. The sequence is that of Citrate synthase (gltA) from Bartonella vinsonii subsp. berkhoffii.